A 500-amino-acid chain; its full sequence is GTPase Der (500 aa).

EngA-type G domains follow at residues 3-166 (PVVA…MEEL) and 211-384 (IKLA…VSAT). Residues 9-16 (GRPNVGKS), 56-60 (DTGGI), 118-121 (NKID), 217-224 (GRPNVGKS), 264-268 (DTAGV), and 329-332 (NKWD) contribute to the GTP site. Positions 385–469 (KRVGTSVLTR…PIRIQFQNSE (85 aa)) constitute a KH-like domain. The segment at 468-500 (SENPFEDRGGKLTMSQERQRKRLLGAVKNRNKK) is disordered. Positions 486 to 500 (QRKRLLGAVKNRNKK) are enriched in basic residues.

This sequence belongs to the TRAFAC class TrmE-Era-EngA-EngB-Septin-like GTPase superfamily. EngA (Der) GTPase family. Associates with the 50S ribosomal subunit.

GTPase that plays an essential role in the late steps of ribosome biogenesis. This is GTPase Der from Aliivibrio fischeri (strain ATCC 700601 / ES114) (Vibrio fischeri).